We begin with the raw amino-acid sequence, 906 residues long: Protein translocase subunit SecA (906 aa).

ATP contacts are provided by residues Gln86, 104-108 (GEGKT), and Asp499. Residues Cys890, Cys892, Cys901, and His902 each contribute to the Zn(2+) site.

The protein belongs to the SecA family. In terms of assembly, monomer and homodimer. Part of the essential Sec protein translocation apparatus which comprises SecA, SecYEG and auxiliary proteins SecDF-YajC and YidC. It depends on Zn(2+) as a cofactor.

The protein resides in the cell inner membrane. It localises to the cytoplasm. It carries out the reaction ATP + H2O + cellular proteinSide 1 = ADP + phosphate + cellular proteinSide 2.. Functionally, part of the Sec protein translocase complex. Interacts with the SecYEG preprotein conducting channel. Has a central role in coupling the hydrolysis of ATP to the transfer of proteins into and across the cell membrane, serving both as a receptor for the preprotein-SecB complex and as an ATP-driven molecular motor driving the stepwise translocation of polypeptide chains across the membrane. The protein is Protein translocase subunit SecA of Rickettsia prowazekii (strain Madrid E).